Here is a 345-residue protein sequence, read N- to C-terminus: Phosphate acyltransferase (345 aa).

It belongs to the PlsX family. Homodimer. Probably interacts with PlsY.

It localises to the cytoplasm. The catalysed reaction is a fatty acyl-[ACP] + phosphate = an acyl phosphate + holo-[ACP]. It participates in lipid metabolism; phospholipid metabolism. In terms of biological role, catalyzes the reversible formation of acyl-phosphate (acyl-PO(4)) from acyl-[acyl-carrier-protein] (acyl-ACP). This enzyme utilizes acyl-ACP as fatty acyl donor, but not acyl-CoA. The polypeptide is Phosphate acyltransferase (Trichlorobacter lovleyi (strain ATCC BAA-1151 / DSM 17278 / SZ) (Geobacter lovleyi)).